A 65-amino-acid chain; its full sequence is MPGVKVKETESFELALKKFKKQCEKAGILSEVRKREHYEKPSIKRKKKAIAARKRAMKKQRKMMD.

Belongs to the bacterial ribosomal protein bS21 family.

The polypeptide is Small ribosomal subunit protein bS21B (Geobacter sulfurreducens (strain ATCC 51573 / DSM 12127 / PCA)).